We begin with the raw amino-acid sequence, 408 residues long: Imidazolonepropionase (408 aa).

Fe(3+) contacts are provided by His73 and His75. Zn(2+) is bound by residues His73 and His75. Residues Arg82, Tyr145, and His178 each contribute to the 4-imidazolone-5-propanoate site. An N-formimidoyl-L-glutamate-binding site is contributed by Tyr145. His243 provides a ligand contact to Fe(3+). His243 lines the Zn(2+) pocket. Gln246 contributes to the 4-imidazolone-5-propanoate binding site. Position 318 (Asp318) interacts with Fe(3+). Asp318 contributes to the Zn(2+) binding site. Positions 320 and 322 each coordinate N-formimidoyl-L-glutamate. Ser323 is a 4-imidazolone-5-propanoate binding site.

The protein belongs to the metallo-dependent hydrolases superfamily. HutI family. Requires Zn(2+) as cofactor. It depends on Fe(3+) as a cofactor.

The protein localises to the cytoplasm. The catalysed reaction is 4-imidazolone-5-propanoate + H2O = N-formimidoyl-L-glutamate. The protein operates within amino-acid degradation; L-histidine degradation into L-glutamate; N-formimidoyl-L-glutamate from L-histidine: step 3/3. In terms of biological role, catalyzes the hydrolytic cleavage of the carbon-nitrogen bond in imidazolone-5-propanoate to yield N-formimidoyl-L-glutamate. It is the third step in the universal histidine degradation pathway. This Shewanella halifaxensis (strain HAW-EB4) protein is Imidazolonepropionase.